Consider the following 373-residue polypeptide: Structure-specific endonuclease subunit EME2 (373 aa).

Residues 24 to 52 form a disordered region; sequence RPQTWEISDSDGEGVPAREVGTQAPSPAG. Positions 47-260 are nuclease-like domain; forms the post-nick DNA binding interface and is involved in DNA recognition and bending; that stretch reads APSPAGERRA…LPSKQHRDSQ (214 aa). The segment at 282 to 373 is helix-hairpin-helix (2HhH); forms the pre-nick DNA binding interface and is involved in DNA recognition and bending; the sequence is GLRGVWWRQI…NPDLLLDLSS (92 aa).

The protein belongs to the EME1/MMS4 family. As to quaternary structure, part of the heterodimeric MUS81-EME2 complex; the complex forms specifically during the DNA replication phase of the cell cycle.

Its subcellular location is the nucleus. Non-catalytic subunit of the structure-specific, heterodimeric DNA endonuclease MUS81-EME2 which is involved in the maintenance of genome stability. In the complex, EME2 is required for DNA cleavage, participating in DNA recognition and bending. MUS81-EME2 cleaves 3'-flaps and nicked Holliday junctions, and exhibit limited endonuclease activity with 5' flaps and nicked double-stranded DNAs. MUS81-EME2 which is active during the replication of DNA is more specifically involved in replication fork processing. Replication forks frequently encounter obstacles to their passage, including DNA base lesions, DNA interstrand cross-links, difficult-to-replicate sequences, transcription bubbles, or tightly bound proteins. One mechanism for the restart of a stalled replication fork involves nucleolytic cleavage mediated by the MUS81-EME2 endonuclease. By acting upon the stalled fork, MUS81-EME2 generates a DNA double-strand break (DSB) that can be repaired by homologous recombination, leading to the restoration of an active fork. MUS81-EME2 could also function in telomere maintenance. This is Structure-specific endonuclease subunit EME2 from Mus musculus (Mouse).